The following is a 231-amino-acid chain: 5'-methylthioadenosine/S-adenosylhomocysteine nucleosidase (231 aa).

Residue E12 is the Proton acceptor of the active site. Substrate-binding positions include G78, I153, and 174 to 175 (ME). Residue D198 is the Proton donor of the active site.

The protein belongs to the PNP/UDP phosphorylase family. MtnN subfamily.

The catalysed reaction is S-adenosyl-L-homocysteine + H2O = S-(5-deoxy-D-ribos-5-yl)-L-homocysteine + adenine. It carries out the reaction S-methyl-5'-thioadenosine + H2O = 5-(methylsulfanyl)-D-ribose + adenine. It catalyses the reaction 5'-deoxyadenosine + H2O = 5-deoxy-D-ribose + adenine. Its pathway is amino-acid biosynthesis; L-methionine biosynthesis via salvage pathway; S-methyl-5-thio-alpha-D-ribose 1-phosphate from S-methyl-5'-thioadenosine (hydrolase route): step 1/2. In terms of biological role, catalyzes the irreversible cleavage of the glycosidic bond in both 5'-methylthioadenosine (MTA) and S-adenosylhomocysteine (SAH/AdoHcy) to adenine and the corresponding thioribose, 5'-methylthioribose and S-ribosylhomocysteine, respectively. Also cleaves 5'-deoxyadenosine, a toxic by-product of radical S-adenosylmethionine (SAM) enzymes, into 5-deoxyribose and adenine. The polypeptide is 5'-methylthioadenosine/S-adenosylhomocysteine nucleosidase (Maridesulfovibrio salexigens (strain ATCC 14822 / DSM 2638 / NCIMB 8403 / VKM B-1763) (Desulfovibrio salexigens)).